The sequence spans 138 residues: MLIPRRVKHRKQHHPSRSGAAKGGTQVTFGDYGIQALEPAYITNRQIESARIAMTRHIKRGGKIWINIFPDRPLTKKPAETRMGSGKGSPEWWIANVKPGRVLFEMTYPNEEIAREALRRAMHKLPCKCRIVTREEQF.

A compositionally biased stretch (basic residues) spans 1-16 (MLIPRRVKHRKQHHPS). Residues 1–25 (MLIPRRVKHRKQHHPSRSGAAKGGT) are disordered.

The protein belongs to the universal ribosomal protein uL16 family. Part of the 50S ribosomal subunit.

Its function is as follows. Binds 23S rRNA and is also seen to make contacts with the A and possibly P site tRNAs. The protein is Large ribosomal subunit protein uL16 of Rhodococcus erythropolis (strain PR4 / NBRC 100887).